A 327-amino-acid polypeptide reads, in one-letter code: Phenylalanine--tRNA ligase alpha subunit (327 aa).

Residue Glu-252 participates in Mg(2+) binding.

The protein belongs to the class-II aminoacyl-tRNA synthetase family. Phe-tRNA synthetase alpha subunit type 1 subfamily. Tetramer of two alpha and two beta subunits. The cofactor is Mg(2+).

Its subcellular location is the cytoplasm. The enzyme catalyses tRNA(Phe) + L-phenylalanine + ATP = L-phenylalanyl-tRNA(Phe) + AMP + diphosphate + H(+). The sequence is that of Phenylalanine--tRNA ligase alpha subunit from Shewanella woodyi (strain ATCC 51908 / MS32).